The primary structure comprises 544 residues: Cannabidiolic acid synthase (544 aa).

The first 28 residues, 1 to 28 (MKCSTFSFWFVCKIIFFFFSFNIQTSIA), serve as a signal peptide directing secretion. Cysteine 37 and cysteine 99 are oxidised to a cystine. Residues asparagine 45 and asparagine 65 are each glycosylated (N-linked (GlcNAc...) asparagine). The FAD-binding PCMH-type domain occupies 77 to 251 (TTPKPLVIVT…VAWKIRLVAV (175 aa)). FAD-binding positions include 109–115 (TRSGGHD) and serine 120. Positions 114–176 (HDSEGMSYIS…ENLSLAAGYC (63 aa)) form a cross-link, 6-(S-cysteinyl)-8alpha-(pros-histidyl)-FAD (His-Cys). Residue asparagine 168 is glycosylated (N-linked (GlcNAc...) asparagine). FAD contacts are provided by residues cysteine 176, 180-184 (CAGGH), tyrosine 190, glutamate 236, and isoleucine 241. Position 291 (histidine 291) interacts with cannabigerolate. Residues asparagine 296, asparagine 304, and asparagine 328 are each glycosylated (N-linked (GlcNAc...) asparagine). Cannabigerolate-binding residues include tyrosine 416 and glutamate 441. An FAD-binding site is contributed by 480–482 (YLN). Tyrosine 483 (proton acceptor) is an active-site residue. N-linked (GlcNAc...) asparagine glycosylation occurs at asparagine 498.

This sequence belongs to the oxygen-dependent FAD-linked oxidoreductase family. As to quaternary structure, monomer. Requires FAD as cofactor. Glycosylated. In terms of processing, the FAD cofactor is bound via a bicovalent 6-S-cysteinyl, 8alpha-N1-histidyl FAD linkage. In terms of tissue distribution, expressed in young leaves.

The protein localises to the secreted. Its subcellular location is the extracellular space. It is found in the apoplast. It carries out the reaction cannabigerolate + O2 = cannabidiolate + H2O2. It participates in secondary metabolite biosynthesis; terpenoid biosynthesis. Its activity is regulated as follows. Inhibited by Hg(2+). Functionally, oxidoreductase involved in the biosynthesis of cannabinoids-related terpenophenolic natural products, which have pharmacological activity. Catalyzes the stereoselective oxidative cyclization of the monoterpene moiety in cannabigerolic acid (CBGA), producing cannabidiolate (CBDA), the major cannabioid in fiber-type Cannabis plants. Can also use cannabinerolic acid as substrate, but not cannabigerol or cannabinerol. The protein is Cannabidiolic acid synthase of Cannabis sativa (Hemp).